The sequence spans 287 residues: Type 1 encapsulin shell protein EncA (287 aa).

Belongs to the encapsulin family. Family 1 subfamily. As to quaternary structure, the 32 nm encapsulin nanocompartment is formed by 180 subunits; monomers form pentamers which assemble to form shells. There are 36 pores where the pentamers meet as well as 3-fold axis channels and dimer channels. The N-terminus of the protein is inside the shell.

It is found in the encapsulin nanocompartment. Shell component of a type 1, iron-storage encapsulin nanocompartment. Encapsulin nanocompartments are 32 nm in diameter with an iron- and phosphorus-rich core (4Fe:1P) about 24 nm in diameter. Upon expression in E.coli most particles are 32 nm, 20% are 18 nm. The core is filled with an average of 14 dense granules, 5-6 nm in diameter that are not evenly distributed. Each nanocompartment is estimated to hold 30,000-35,000 Fe atoms. The minor proteins EncB, EncC and EncD probably lie against the interior face of the nanocompartment. The sequence is that of Type 1 encapsulin shell protein EncA from Myxococcus xanthus (strain DK1622).